The sequence spans 342 residues: MSINIEQAIIHEISQDSQGQLRCRLRPQPLLNGQAVEMMLEELHQTYTSKSGKGFGYFGIHGDDGEANPAFANALKEYRAGDLGFVEFTGQASKLLQEELAKYDFSQGGFLLMSCYTSMASDYLFVALLSAKSSMTVLDDMELSQNNHLDLNNIQLAARIDLTELQADKDSRKYISFIRGRAGRKVADFFLDFMGCVEGVNTKAQNKTLMNAVEDFVASSDLTKEERQQCRNKVFEYCSERFDEGADIEIKDLADELADQGMESFYDFARGGSYELDEEFPADKSTLRQLKKFSGTGGGVTISFDGGHLGQRVIYDPISDTILIKGVPANLKDQLDRRLKGE.

It belongs to the YejK family.

The protein localises to the cytoplasm. Its subcellular location is the nucleoid. This is Nucleoid-associated protein SO_2177 from Shewanella oneidensis (strain ATCC 700550 / JCM 31522 / CIP 106686 / LMG 19005 / NCIMB 14063 / MR-1).